Here is a 549-residue protein sequence, read N- to C-terminus: Cytoplasmic trehalase (549 aa).

Substrate contacts are provided by residues R168, W175 to D176, N212, R221 to Q223, R292 to E294, and G324. Catalysis depends on proton donor/acceptor residues D326 and E509. Position 525 (E525) interacts with substrate.

This sequence belongs to the glycosyl hydrolase 37 family. Monomer.

The protein localises to the cytoplasm. It catalyses the reaction alpha,alpha-trehalose + H2O = alpha-D-glucose + beta-D-glucose. It functions in the pathway glycan degradation; trehalose degradation; D-glucose from alpha,alpha-trehalose: step 1/1. In terms of biological role, hydrolyzes trehalose to glucose. Could be involved, in cells returning to low osmolarity conditions, in the utilization of the accumulated cytoplasmic trehalose, which was synthesized in response to high osmolarity. The protein is Cytoplasmic trehalase of Escherichia coli O139:H28 (strain E24377A / ETEC).